The chain runs to 122 residues: Large ribosomal subunit protein uL14 (122 aa).

Belongs to the universal ribosomal protein uL14 family. Part of the 50S ribosomal subunit. Forms a cluster with proteins L3 and L19. In the 70S ribosome, L14 and L19 interact and together make contacts with the 16S rRNA in bridges B5 and B8.

Binds to 23S rRNA. Forms part of two intersubunit bridges in the 70S ribosome. The protein is Large ribosomal subunit protein uL14 of Halalkalibacterium halodurans (strain ATCC BAA-125 / DSM 18197 / FERM 7344 / JCM 9153 / C-125) (Bacillus halodurans).